A 166-amino-acid polypeptide reads, in one-letter code: Phospholipase A2 inhibitor A4/A5 (166 aa).

An N-terminal signal peptide occupies residues 1–19 (MRLILLSGLLLLGTFLVNG). A C-type lectin domain is found at 46-161 (LFHAFLTVHK…CDDNLLVVCE (116 aa)). 2 cysteine pairs are disulfide-bonded: cysteine 83/cysteine 160 and cysteine 138/cysteine 152. Asparagine 122 is a glycosylation site (N-linked (GlcNAc...) asparagine).

The protein belongs to the alpha-type phospholipase A2 inhibitor family. Homotrimer; non-covalently linked. In terms of tissue distribution, expressed by the liver.

The protein resides in the secreted. In terms of biological role, this phospholipase A2 inhibitor binds directly phospholipase A2 in the presence or absence of calcium. The sequence is that of Phospholipase A2 inhibitor A4/A5 from Crotalus durissus terrificus (South American rattlesnake).